Here is an 82-residue protein sequence, read N- to C-terminus: Conotoxin Gla-TxX (82 aa).

The first 25 residues, 1–25 (MSGHTSVSFLLLSIVALGMVATVIC), serve as a signal peptide directing secretion. 4-carboxyglutamate is present on residues glutamate 30, glutamate 34, glutamate 37, glutamate 40, and glutamate 41. Asparagine 72 is modified (asparagine amide). The propeptide occupies 77 to 82 (LIHMQK).

Contains 4 disulfide bonds. Expressed by the venom duct.

The protein localises to the secreted. The sequence is that of Conotoxin Gla-TxX from Conus textile (Cloth-of-gold cone).